Reading from the N-terminus, the 95-residue chain is Large ribosomal subunit protein bL25 (95 aa).

This sequence belongs to the bacterial ribosomal protein bL25 family. Part of the 50S ribosomal subunit; part of the 5S rRNA/L5/L18/L25 subcomplex. Contacts the 5S rRNA. Binds to the 5S rRNA independently of L5 and L18.

This is one of the proteins that binds to the 5S RNA in the ribosome where it forms part of the central protuberance. The sequence is that of Large ribosomal subunit protein bL25 from Glaesserella parasuis serovar 5 (strain SH0165) (Haemophilus parasuis).